Here is a 178-residue protein sequence, read N- to C-terminus: Large ribosomal subunit protein uL6 (178 aa).

This sequence belongs to the universal ribosomal protein uL6 family. Part of the 50S ribosomal subunit.

This protein binds to the 23S rRNA, and is important in its secondary structure. It is located near the subunit interface in the base of the L7/L12 stalk, and near the tRNA binding site of the peptidyltransferase center. This Oenococcus oeni (strain ATCC BAA-331 / PSU-1) protein is Large ribosomal subunit protein uL6.